We begin with the raw amino-acid sequence, 310 residues long: GPN-loop GTPase 2 (310 aa).

Residue Ala2 is modified to N-acetylalanine. A GTP-binding site is contributed by 19-24; that stretch reads GSGKTT. The Gly-Pro-Asn (GPN)-loop; involved in dimer interface motif lies at 76 to 78; the sequence is GPN. 178–181 is a GTP binding site; that stretch reads SKMD.

It belongs to the GPN-loop GTPase family. In terms of assembly, heterodimers with GPN1 or GPN3. Binds to RNA polymerase II (RNAPII).

Functionally, small GTPase required for proper localization of RNA polymerase II and III (RNAPII and RNAPIII). May act at an RNAP assembly step prior to nuclear import. The chain is GPN-loop GTPase 2 from Homo sapiens (Human).